The chain runs to 476 residues: MKSIEDFMKKYELSFDGVTLIAGVSGGPDSMALLHALHHTVPASATLIAAHVDHMFRGEESERDMRFVQDYCEAEGIQCEAVQIDVLAFAAENNLNKQAAARECRYAFFQELMKRHRAEYLVLGHHGDDQVETMLMKMAKGTVGIGLAGIQPKRRFDSGWLLRPFLKLSKDDLLAYCKENRIPFRTDPSNSEDDYTRNRFRHHVLPFLKKESEDVHKRFQSVSEFLTEDELYLQALTKDKMNTVITSKSSSGVEISIERLLALPMPLQRRGVHLILNYLYENVPSAFSAHHIQVFLDWISQDGPSGSLDFPNGLKVAKSYHTCLFTFQRLQCENVSYHYEISGAGEEELILPGGSSLHVSGPGSTRKLQGNDVFATSPKQVQFPLYVRTRQNGDRVKLKGMNGSKKVKDIFIDEKVPLSKRDSWPIVTDAVGNIIWIPGLKKTIFEELDVTNNDRIVLQYRQHEKCRGLAKNETGY.

25 to 30 (SGGPDS) contacts ATP.

It belongs to the tRNA(Ile)-lysidine synthase family.

The protein localises to the cytoplasm. The catalysed reaction is cytidine(34) in tRNA(Ile2) + L-lysine + ATP = lysidine(34) in tRNA(Ile2) + AMP + diphosphate + H(+). In terms of biological role, ligates lysine onto the cytidine present at position 34 of the AUA codon-specific tRNA(Ile) that contains the anticodon CAU, in an ATP-dependent manner. Cytidine is converted to lysidine, thus changing the amino acid specificity of the tRNA from methionine to isoleucine. The sequence is that of tRNA(Ile)-lysidine synthase from Bacillus licheniformis (strain ATCC 14580 / DSM 13 / JCM 2505 / CCUG 7422 / NBRC 12200 / NCIMB 9375 / NCTC 10341 / NRRL NRS-1264 / Gibson 46).